The sequence spans 543 residues: Thiamine transport system permease protein ThiP (543 aa).

A run of 12 helical transmembrane segments spans residues 19-39, 64-84, 102-122, 142-162, 205-225, 250-270, 300-320, 343-363, 379-399, 406-426, 468-488, and 510-530; these read VAGG…LLAL, FTIW…IPIA, LFAL…TSIY, DIYG…PLAV, GMIG…LTLG, AVAL…ILRL, IIVI…VVVS, LALG…LVAA, GASL…FILL, FVMA…PFAV, GMAF…IALF, and FDAA…MMIA. One can recognise an ABC transmembrane type-1 1 domain in the interval 62–266; that stretch reads ARFTIWQAVA…QLALTLLILL (205 aa). An ABC transmembrane type-1 2 domain is found at 339 to 530; the sequence is IATSLALGFS…VLCLALMMIA (192 aa).

The protein belongs to the binding-protein-dependent transport system permease family. CysTW subfamily. In terms of assembly, the complex is composed of two ATP-binding proteins (ThiQ), two transmembrane proteins (ThiP) and a solute-binding protein (ThiB).

The protein localises to the cell inner membrane. Part of the ABC transporter complex ThiBPQ involved in thiamine import. Probably responsible for the translocation of the substrate across the membrane. This Brucella abortus (strain 2308) protein is Thiamine transport system permease protein ThiP (thiP).